The chain runs to 395 residues: Elongation factor Tu (395 aa).

Positions 10–204 constitute a tr-type G domain; sequence LPHVNIGTIG…AVDEYIPTPQ (195 aa). The tract at residues 19–26 is G1; the sequence is GHVDHGKT. 19–26 is a GTP binding site; it reads GHVDHGKT. T26 provides a ligand contact to Mg(2+). Residues 60–64 are G2; that stretch reads GITIN. Residues 81-84 are G3; that stretch reads DCPG. GTP contacts are provided by residues 81–85 and 136–139; these read DCPGH and NKCD. The segment at 136-139 is G4; that stretch reads NKCD. Residues 174 to 176 form a G5 region; sequence SAL.

This sequence belongs to the TRAFAC class translation factor GTPase superfamily. Classic translation factor GTPase family. EF-Tu/EF-1A subfamily. In terms of assembly, monomer.

The protein localises to the cytoplasm. The catalysed reaction is GTP + H2O = GDP + phosphate + H(+). In terms of biological role, GTP hydrolase that promotes the GTP-dependent binding of aminoacyl-tRNA to the A-site of ribosomes during protein biosynthesis. In Mycoplasma capricolum subsp. capricolum (strain California kid / ATCC 27343 / NCTC 10154), this protein is Elongation factor Tu.